The primary structure comprises 109 residues: Cytochrome c-550 (109 aa).

4 residues coordinate heme c: cysteine 13, cysteine 16, histidine 17, and methionine 79.

Binds 1 heme c group covalently per subunit.

The protein is Cytochrome c-550 of Nitrobacter winogradskyi (Nitrobacter agilis).